The chain runs to 720 residues: Glutaryl-7-aminocephalosporanic-acid acylase (720 aa).

Residues 1 to 29 form the signal peptide; it reads MLRVLHRAASALVMATVIGLAPGVAFALA. A propeptide spans 188-198 (spacer peptide); sequence EGDPPDLADQG. Serine 199 acts as the Nucleophile in catalysis. Active-site residues include histidine 221 and glutamate 653.

The protein belongs to the peptidase S45 family. As to quaternary structure, heterodimer of a small subunit and a large subunit processed from the same precursor.

It localises to the periplasm. It carries out the reaction (7R)-7-(4-carboxybutanamido)cephalosporanate + H2O = (7R)-7-aminocephalosporanate + glutarate. Its function is as follows. Catalyzes the deacylation of 7 beta-(4-carboxybutanamido)cephalosporanic acid (glutaryl-7-aminocephalosporanic acid or GL-7-ACA) to 7-aminocephalosporanic acid (7-ACA). Cannot efficiently use cephalosporin C (CPC), penicillin G, or ampicillin as substrates. This is Glutaryl-7-aminocephalosporanic-acid acylase from Brevundimonas diminuta (Pseudomonas diminuta).